The primary structure comprises 708 residues: GID complex associated protein 12 (708 aa).

Over residues 381–396 (SSRRNSSFSTASSEPR) the composition is skewed to low complexity. The segment at 381–403 (SSRRNSSFSTASSEPRPLSRRRR) is disordered.

In terms of assembly, interacts with core components of the GID/CTLH ubiquitin ligase complex. GID12 binds both the substrate receptor GID4 and the tip of GID5 in the scaffolding module, sealing GID4 onto the scaffold.

In terms of biological role, regulator of the GID E3 ligase complex. Modulates both assembly of the substrate receptor GID4 into the GID E3 ligase complex and its activity toward its substrates. GID12-binding remodels the N-degron binding pocket in the GID(SR4) complex, and could limit substrate accessibility of a bulky substrate to a ubiquitynation active site, thereby stabilizing gluconeogenic enzyme substrates. Involved in actin patch formation. The protein is GID complex associated protein 12 of Saccharomyces cerevisiae (strain ATCC 204508 / S288c) (Baker's yeast).